The primary structure comprises 132 residues: Agouti-signaling protein (132 aa).

An N-terminal signal peptide occupies residues 1-22 (MDVTRLLLATLLVFLCFFTAYS). Residue asparagine 39 is glycosylated (N-linked (GlcNAc...) asparagine). Residues 57–88 (KKSKQTSRKEAEKKRSSKKEASMKKVARPRTP) are disordered. The segment covering 63–79 (SRKEAEKKRSSKKEASM) has biased composition (basic and acidic residues). Cystine bridges form between cysteine 93–cysteine 108, cysteine 100–cysteine 114, cysteine 107–cysteine 125, cysteine 111–cysteine 132, and cysteine 116–cysteine 123. The Agouti domain occupies 93–132 (CVATRDSCKPPAPACCDPCASCQCRFFRSACSCRVLSLNC).

The protein resides in the secreted. Its function is as follows. Involved in the regulation of melanogenesis. The binding of ASP to MC1R precludes alpha-MSH initiated signaling and thus blocks production of cAMP, leading to a down-regulation of eumelanogenesis (brown/black pigment) and thus increasing synthesis of pheomelanin (yellow/red pigment). This chain is Agouti-signaling protein (ASIP), found in Macaca assamensis (Assam macaque).